A 421-amino-acid chain; its full sequence is UDP-N-acetylglucosamine 1-carboxyvinyltransferase 1 (421 aa).

A phosphoenolpyruvate-binding site is contributed by 22–23; the sequence is KN. Arg-95 lines the UDP-N-acetyl-alpha-D-glucosamine pocket. Cys-119 serves as the catalytic Proton donor. Cys-119 carries the 2-(S-cysteinyl)pyruvic acid O-phosphothioketal modification. Residues 124-128, Asp-308, and Val-330 contribute to the UDP-N-acetyl-alpha-D-glucosamine site; that span reads RPIEQ.

Belongs to the EPSP synthase family. MurA subfamily.

The protein localises to the cytoplasm. It carries out the reaction phosphoenolpyruvate + UDP-N-acetyl-alpha-D-glucosamine = UDP-N-acetyl-3-O-(1-carboxyvinyl)-alpha-D-glucosamine + phosphate. Its pathway is cell wall biogenesis; peptidoglycan biosynthesis. Its function is as follows. Cell wall formation. Adds enolpyruvyl to UDP-N-acetylglucosamine. The polypeptide is UDP-N-acetylglucosamine 1-carboxyvinyltransferase 1 (Staphylococcus epidermidis (strain ATCC 35984 / DSM 28319 / BCRC 17069 / CCUG 31568 / BM 3577 / RP62A)).